The sequence spans 256 residues: MIKRVNKLVIGISLLFLVISITAGCGMGKEEEIKKSFEKTLSMYPIKNLEDLYDKKGYRDDQFDKNDKGTWIVRSSMSIQPNGKDMNVKGMVLYMIRNTRTTNGYYYVDVIEREDKGIHRDNEKRYPVKMVDNKIIPTKEIEDEKIKKEIENFKFFVQYGNFKDLSKYKDGDISYNPEAPIYSAKYQLTNNDYNVKQLRKRYNIPTNKAPKLLLKGTGNLKGSSVGYKDIEFTFVEKKGENIYFSDSLHLEPSEDK.

Positions 1–24 are cleaved as a signal peptide; the sequence is MIKRVNKLVIGISLLFLVISITAG. Cys-25 is lipidated: N-palmitoyl cysteine. The S-diacylglycerol cysteine moiety is linked to residue Cys-25.

This sequence belongs to the staphylococcal tandem lipoprotein family.

It localises to the cell membrane. This is an uncharacterized protein from Staphylococcus aureus (strain bovine RF122 / ET3-1).